A 139-amino-acid polypeptide reads, in one-letter code: Large ribosomal subunit protein uL16 (139 aa).

This sequence belongs to the universal ribosomal protein uL16 family. As to quaternary structure, part of the 50S ribosomal subunit.

Its function is as follows. Binds 23S rRNA and is also seen to make contacts with the A and possibly P site tRNAs. The protein is Large ribosomal subunit protein uL16 of Mycoplasma pneumoniae (strain ATCC 29342 / M129 / Subtype 1) (Mycoplasmoides pneumoniae).